The sequence spans 73 residues: Long neurotoxin 2 (73 aa).

5 disulfides stabilise this stretch: Cys3–Cys21, Cys14–Cys42, Cys27–Cys31, Cys46–Cys57, and Cys58–Cys63.

The protein belongs to the three-finger toxin family. Long-chain subfamily. Type II alpha-neurotoxin sub-subfamily. As to expression, expressed by the venom gland.

The protein localises to the secreted. Binds with high affinity to muscular (alpha-1/CHRNA1) and neuronal (alpha-7/CHRNA7) nicotinic acetylcholine receptor (nAChR) and inhibits acetylcholine from binding to the receptor, thereby impairing neuromuscular and neuronal transmission. This Ophiophagus hannah (King cobra) protein is Long neurotoxin 2.